The chain runs to 220 residues: Claudin-22 (220 aa).

Residues 1–10 are Cytoplasmic-facing; sequence MGLVFRTATQ. The helical transmembrane segment at 11–31 threads the bilayer; the sequence is AAALLLSLLGWVLSCLTNYLP. Residues 32-81 are Extracellular-facing; it reads HWKNLNLELNEMENWTMGLWKSCVIQEEVGRQCKDFDSFLALPAELQVSR. The helical transmembrane segment at 82–102 threads the bilayer; it reads VLMSLCNGLGLLGLLASGCGL. Over 103–120 the chain is Cytoplasmic; sequence DCLRLGETQEGLKKRLLT. The chain crosses the membrane as a helical span at residues 121 to 141; it reads LGGTLLWTSGVMVLVPVSWVA. At 142 to 164 the chain is on the extracellular side; sequence HKTVREFWDETMPEIVPRWEFGE. Residues 165–185 traverse the membrane as a helical segment; the sequence is ALFLGWFAGFCLVLGGCVLHC. Residues 186-220 are Cytoplasmic-facing; that stretch reads AACWSPAPAASSHYAVAGPRDHQQHLELKQANPEI.

Belongs to the claudin family.

It localises to the cell junction. The protein resides in the tight junction. Its subcellular location is the cell membrane. Plays a major role in tight junction-specific obliteration of the intercellular space, through calcium-independent cell-adhesion activity. The chain is Claudin-22 (Cldn22) from Mus musculus (Mouse).